A 433-amino-acid chain; its full sequence is Small ribosomal subunit biogenesis GTPase RsgA 1, mitochondrial (433 aa).

The segment at 1 to 20 (MLRAKHIGKNYSSSLSPVLS) is disordered. A CP-type G domain is found at 113 to 291 (SEILDPPVAN…LADTPGFNQP (179 aa)). 212-220 (GPSGVGKSS) contributes to the GTP binding site. Residues cysteine 317, cysteine 322, histidine 324, and cysteine 330 each contribute to the Zn(2+) site.

Belongs to the TRAFAC class YlqF/YawG GTPase family. RsgA subfamily. As to quaternary structure, monomer. Associates with 30S ribosomal subunit, binds 16S rRNA. Requires Zn(2+) as cofactor.

The protein localises to the mitochondrion. One of several proteins that assist in the late maturation steps of the functional core of the 30S ribosomal subunit. Helps release RbfA from mature subunits. May play a role in the assembly of ribosomal proteins into the subunit. Circularly permuted GTPase that catalyzes slow GTP hydrolysis, GTPase activity is stimulated by the 30S ribosomal subunit. Required for embryo development. The chain is Small ribosomal subunit biogenesis GTPase RsgA 1, mitochondrial from Arabidopsis thaliana (Mouse-ear cress).